Reading from the N-terminus, the 538-residue chain is Putative outer membrane porin BglH (538 aa).

Positions 1 to 25 (MFRRNLITSAILLMAPLAFSAQSLA) are cleaved as a signal peptide. Positions 52–82 (KDEEKKKYTPATVNRSVSTNDQGYAANPFPT) are disordered. The span at 62-73 (ATVNRSVSTNDQ) shows a compositional bias: polar residues.

It belongs to the porin LamB (TC 1.B.3) family.

The protein resides in the cell outer membrane. Functionally, may be a sugar porin with a broad carbohydrate specificity. The protein is Putative outer membrane porin BglH (bglH) of Escherichia coli O139:H28 (strain E24377A / ETEC).